A 364-amino-acid chain; its full sequence is Protein leg1a (364 aa).

An N-terminal signal peptide occupies residues 1–22; the sequence is MSEMGFLRSVAAVLLLAVFSHA. An N-linked (GlcNAc...) asparagine glycan is attached at Asn70.

It belongs to the LEG1 family. Detected in all tissues tested, with the highest levels in serum (at protein level). At mRNA level, only expressed in liver.

Its subcellular location is the secreted. Functionally, important for early development of liver, exocrine pancreas and intestine, probably through cell cycle regulation. In liver, its function is partially redundant with leg1b function. The polypeptide is Protein leg1a (Danio rerio (Zebrafish)).